A 338-amino-acid polypeptide reads, in one-letter code: MAGSHPYFNLPDSTHPSPPSTPPSLHWHQRCQPSDATNGLLVALLGGGLPAGFVGPLSRMAYQASNLPSLELVICRCLFHLPIALLLKLRGDPLLGPPDIRGRTCFCALLNVLNIGCAYSAVQVVPTGNAATVRKHSSTVCSAILTLCLESQVLSGYDWCGLLGSILGLIIIVGPGLWTLQEGTTGVYTGLGYVQAFLGGLALSLGLLVYRSLHFPSCLPTVAFLSGLVGLLGSVPGLFVLQSPVLPSDLLSWSCVGAVGILTLVSFTCVGYAVTKAHPALVCAVLHSEVVMALILQYFMLHETVAPSDIMGAGVVLGSIAIITARNLICERTGKVEE.

The interval 1–29 (MAGSHPYFNLPDSTHPSPPSTPPSLHWHQ) is disordered. 7 helical membrane-spanning segments follow: residues 37–57 (TNGLLVALLGGGLPAGFVGPL), 160–180 (CGLLGSILGLIIIVGPGLWTL), 190–210 (GLGYVQAFLGGLALSLGLLVY), 221–241 (TVAFLSGLVGLLGSVPGLFVL), 250–270 (LLSWSCVGAVGILTLVSFTCV), 281–301 (LVCAVLHSEVVMALILQYFML), and 305–325 (VAPSDIMGAGVVLGSIAIITA). The EamA 1 domain maps to 49 to 174 (LPAGFVGPLS…SILGLIIIVG (126 aa)). Residues 272 to 325 (YAVTKAHPALVCAVLHSEVVMALILQYFMLHETVAPSDIMGAGVVLGSIAIITA) form the EamA 2 domain.

It belongs to the SLC35G solute transporter family.

The protein localises to the membrane. The sequence is that of Solute carrier family 35 member G4 (SLC35G4) from Homo sapiens (Human).